Here is a 364-residue protein sequence, read N- to C-terminus: UDP-N-acetylglucosamine--N-acetylmuramyl-(pentapeptide) pyrophosphoryl-undecaprenol N-acetylglucosamine transferase (364 aa).

UDP-N-acetyl-alpha-D-glucosamine-binding positions include 10-12 (TGG), asparagine 124, arginine 165, serine 193, isoleucine 248, and glutamine 293.

Belongs to the glycosyltransferase 28 family. MurG subfamily.

It is found in the cell inner membrane. The enzyme catalyses di-trans,octa-cis-undecaprenyl diphospho-N-acetyl-alpha-D-muramoyl-L-alanyl-D-glutamyl-meso-2,6-diaminopimeloyl-D-alanyl-D-alanine + UDP-N-acetyl-alpha-D-glucosamine = di-trans,octa-cis-undecaprenyl diphospho-[N-acetyl-alpha-D-glucosaminyl-(1-&gt;4)]-N-acetyl-alpha-D-muramoyl-L-alanyl-D-glutamyl-meso-2,6-diaminopimeloyl-D-alanyl-D-alanine + UDP + H(+). Its pathway is cell wall biogenesis; peptidoglycan biosynthesis. In terms of biological role, cell wall formation. Catalyzes the transfer of a GlcNAc subunit on undecaprenyl-pyrophosphoryl-MurNAc-pentapeptide (lipid intermediate I) to form undecaprenyl-pyrophosphoryl-MurNAc-(pentapeptide)GlcNAc (lipid intermediate II). The polypeptide is UDP-N-acetylglucosamine--N-acetylmuramyl-(pentapeptide) pyrophosphoryl-undecaprenol N-acetylglucosamine transferase (Geobacter metallireducens (strain ATCC 53774 / DSM 7210 / GS-15)).